Reading from the N-terminus, the 273-residue chain is 5-deoxy-glucuronate isomerase (273 aa).

This sequence belongs to the isomerase IolB family.

It catalyses the reaction 5-deoxy-D-glucuronate = 5-dehydro-2-deoxy-D-gluconate. It functions in the pathway polyol metabolism; myo-inositol degradation into acetyl-CoA; acetyl-CoA from myo-inositol: step 4/7. Its function is as follows. Involved in the isomerization of 5-deoxy-glucuronate (5DG) to 5-dehydro-2-deoxy-D-gluconate (DKG or 2-deoxy-5-keto-D-gluconate). The polypeptide is 5-deoxy-glucuronate isomerase (Listeria innocua serovar 6a (strain ATCC BAA-680 / CLIP 11262)).